We begin with the raw amino-acid sequence, 429 residues long: D-galactonate dehydratase family member Caci_4410 (429 aa).

The segment at 1–22 (MTDANHLLDPSGALPQTRPPWT) is disordered. Position 233 (D233) interacts with Mg(2+). Position 235 (H235) interacts with D-arabinonate. Residues E259 and E285 each coordinate Mg(2+). Positions 285, 306, 335, and 362 each coordinate D-arabinonate.

It belongs to the mandelate racemase/muconate lactonizing enzyme family. GalD subfamily.

In terms of biological role, has no detectable activity with D-mannonate and with a panel of 70 other acid sugars (in vitro), in spite of the conservation of the residues that are expected to be important for catalytic activity and cofactor binding. May have evolved a divergent function. The polypeptide is D-galactonate dehydratase family member Caci_4410 (Catenulispora acidiphila (strain DSM 44928 / JCM 14897 / NBRC 102108 / NRRL B-24433 / ID139908)).